The following is a 225-amino-acid chain: Ribosomal RNA large subunit methyltransferase E (225 aa).

5 residues coordinate S-adenosyl-L-methionine: G64, W66, D93, D109, and D138. The active-site Proton acceptor is the K178.

The protein belongs to the class I-like SAM-binding methyltransferase superfamily. RNA methyltransferase RlmE family.

It localises to the cytoplasm. The enzyme catalyses uridine(2552) in 23S rRNA + S-adenosyl-L-methionine = 2'-O-methyluridine(2552) in 23S rRNA + S-adenosyl-L-homocysteine + H(+). In terms of biological role, specifically methylates the uridine in position 2552 of 23S rRNA at the 2'-O position of the ribose in the fully assembled 50S ribosomal subunit. The chain is Ribosomal RNA large subunit methyltransferase E from Cupriavidus pinatubonensis (strain JMP 134 / LMG 1197) (Cupriavidus necator (strain JMP 134)).